We begin with the raw amino-acid sequence, 295 residues long: Alpha-soluble NSF attachment protein (295 aa).

N-acetylmethionine is present on Met-1. Phosphoserine occurs at positions 26, 29, and 195.

The protein belongs to the SNAP family. As to quaternary structure, interacts with PRKCABP, and disrupts the interaction between GRIA2 and PRKCABP, leading to the internalization of GRIA2. Found in a complex with VAMP8. Component of a SNARE-like complex that contains at least ZW10, USE1L, RINT1, STX18 and NAPA/SNAP-alpha. Interacts with VTI1A. Interacts with STX12. Interacts with GNA12 (via N-terminus); the interaction promotes CDH5 localization to plasma membrane.

It is found in the cell membrane. Functionally, required for vesicular transport between the endoplasmic reticulum and the Golgi apparatus. Together with GNA12 promotes CDH5 localization to plasma membrane. This is Alpha-soluble NSF attachment protein (Napa) from Mus musculus (Mouse).